Here is a 271-residue protein sequence, read N- to C-terminus: Acetyl-coenzyme A carboxylase carboxyl transferase subunit beta (271 aa).

One can recognise a CoA carboxyltransferase N-terminal domain in the interval 21–271 (LWIQCPYCKQ…LGDLLALHTA (251 aa)). Residues Cys25, Cys28, Cys43, and Cys46 each coordinate Zn(2+). The segment at 25 to 46 (CPYCKQGSYRESLGNAQVCPHC) adopts a C4-type zinc-finger fold.

Belongs to the AccD/PCCB family. In terms of assembly, acetyl-CoA carboxylase is a heterohexamer composed of biotin carboxyl carrier protein (AccB), biotin carboxylase (AccC) and two subunits each of ACCase subunit alpha (AccA) and ACCase subunit beta (AccD). It depends on Zn(2+) as a cofactor.

Its subcellular location is the cytoplasm. The catalysed reaction is N(6)-carboxybiotinyl-L-lysyl-[protein] + acetyl-CoA = N(6)-biotinyl-L-lysyl-[protein] + malonyl-CoA. The protein operates within lipid metabolism; malonyl-CoA biosynthesis; malonyl-CoA from acetyl-CoA: step 1/1. Component of the acetyl coenzyme A carboxylase (ACC) complex. Biotin carboxylase (BC) catalyzes the carboxylation of biotin on its carrier protein (BCCP) and then the CO(2) group is transferred by the transcarboxylase to acetyl-CoA to form malonyl-CoA. This chain is Acetyl-coenzyme A carboxylase carboxyl transferase subunit beta, found in Lacticaseibacillus casei (strain BL23) (Lactobacillus casei).